A 310-amino-acid chain; its full sequence is 4-hydroxythreonine-4-phosphate dehydrogenase (310 aa).

Thr-129 serves as a coordination point for substrate. The a divalent metal cation site is built by His-158, His-202, and His-250. Substrate contacts are provided by Lys-258, Asn-267, and Arg-276.

The protein belongs to the PdxA family. Homodimer. A divalent metal cation serves as cofactor.

It is found in the cytoplasm. It carries out the reaction 4-(phosphooxy)-L-threonine + NAD(+) = 3-amino-2-oxopropyl phosphate + CO2 + NADH. It functions in the pathway cofactor biosynthesis; pyridoxine 5'-phosphate biosynthesis; pyridoxine 5'-phosphate from D-erythrose 4-phosphate: step 4/5. Its function is as follows. Catalyzes the NAD(P)-dependent oxidation of 4-(phosphooxy)-L-threonine (HTP) into 2-amino-3-oxo-4-(phosphooxy)butyric acid which spontaneously decarboxylates to form 3-amino-2-oxopropyl phosphate (AHAP). The polypeptide is 4-hydroxythreonine-4-phosphate dehydrogenase (Hydrogenobaculum sp. (strain Y04AAS1)).